The chain runs to 860 residues: Leucine--tRNA ligase (860 aa).

The 'HIGH' region motif lies at 42–52 (PYPSGRLHMGH). A 'KMSKS' region motif is present at residues 619 to 623 (KMSKS). Lys-622 lines the ATP pocket.

This sequence belongs to the class-I aminoacyl-tRNA synthetase family.

The protein resides in the cytoplasm. It carries out the reaction tRNA(Leu) + L-leucine + ATP = L-leucyl-tRNA(Leu) + AMP + diphosphate. This Salmonella typhi protein is Leucine--tRNA ligase.